A 284-amino-acid chain; its full sequence is Aminoglycoside 6-adenylyltransferase (284 aa).

As to quaternary structure, homodimer.

The protein resides in the cytoplasm. The enzyme catalyses streptomycin + ATP = 6-O-adenylylstreptomycin + diphosphate. It catalyses the reaction streptomycin + GTP = 6-O-guanylylstreptomycin + diphosphate. It carries out the reaction streptidine + ATP = 6-O-adenylylstreptidine + diphosphate. In terms of biological role, mediates bacterial resistance to streptomycin. Adenylates streptomycin on the O-6 residue. Adenylates streptidine on the O-6 residue. Does not act on spectinomycin, neomycin-B or kanamycin. Specific for ATP and GTP nucleotides incorporating a purine ring. No reaction with CTP or UTP. This chain is Aminoglycoside 6-adenylyltransferase, found in Bacillus subtilis (strain 168).